A 379-amino-acid chain; its full sequence is Isocitrate dehydrogenase [NAD] subunit 2, mitochondrial (379 aa).

Residues methionine 1 to phenylalanine 27 constitute a mitochondrion transit peptide. Positions 129, 139, 160, and 247 each coordinate substrate. Positions 247, 273, and 277 each coordinate Mg(2+).

It belongs to the isocitrate and isopropylmalate dehydrogenases family. Octamer of two non-identical subunits IDH1 and IDH2. Mg(2+) is required as a cofactor. Requires Mn(2+) as cofactor.

The protein localises to the mitochondrion. The enzyme catalyses D-threo-isocitrate + NAD(+) = 2-oxoglutarate + CO2 + NADH. Performs an essential role in the oxidative function of the citric acid cycle and is involved in glutamate biosynthesis. Also binds RNA; specifically to the 5'-untranslated leaders of mitochondrial mRNAs. The polypeptide is Isocitrate dehydrogenase [NAD] subunit 2, mitochondrial (idh2) (Schizosaccharomyces pombe (strain 972 / ATCC 24843) (Fission yeast)).